A 339-amino-acid chain; its full sequence is MREKLAQVVEEAEKALAGASTAEVVEEVRIRYLGKKGVLTQVLRSMGSLPAAERPVVGKLANEMKVRLEQALASRSALLKQEEKAARLAAERIDVTLPGVLPHLGSMHPLTMVRTEIENIFLGLGFQIVEGPEVELEYYNFEALNFPKDHPARDMQDTFFINDEVLLRTHTSPVQVRTFEKTAPRVPVRIIAPGKVYREDDDATHSPMFNQVEGFAVDTRITLGDLKGTLVYFVREMFGERRMRFRPSFFPFTEPSAEVDISCVICGGGGCRVCSHTGWLEILGAGMIHPRVLEVSGYDAEKVSGFAFGMGIERVAMLKYGIDNIRLFFDNDLRFLNQF.

A Mg(2+)-binding site is contributed by glutamate 254.

Belongs to the class-II aminoacyl-tRNA synthetase family. Phe-tRNA synthetase alpha subunit type 1 subfamily. In terms of assembly, tetramer of two alpha and two beta subunits. Mg(2+) serves as cofactor.

The protein resides in the cytoplasm. The enzyme catalyses tRNA(Phe) + L-phenylalanine + ATP = L-phenylalanyl-tRNA(Phe) + AMP + diphosphate + H(+). This Desulforudis audaxviator (strain MP104C) protein is Phenylalanine--tRNA ligase alpha subunit.